The following is a 243-amino-acid chain: Carboxy-S-adenosyl-L-methionine synthase (243 aa).

Residues Tyr40, 65-67 (GCS), 90-91 (DN), 118-119 (DI), Asn133, and Arg200 contribute to the S-adenosyl-L-methionine site.

The protein belongs to the class I-like SAM-binding methyltransferase superfamily. Cx-SAM synthase family. In terms of assembly, homodimer.

The catalysed reaction is prephenate + S-adenosyl-L-methionine = carboxy-S-adenosyl-L-methionine + 3-phenylpyruvate + H2O. Catalyzes the conversion of S-adenosyl-L-methionine (SAM) to carboxy-S-adenosyl-L-methionine (Cx-SAM). The protein is Carboxy-S-adenosyl-L-methionine synthase of Shewanella amazonensis (strain ATCC BAA-1098 / SB2B).